The following is a 207-amino-acid chain: Cytochrome c oxidase subunit 3 (207 aa).

5 consecutive transmembrane segments (helical) span residues 30–50, 67–87, 101–121, 144–164, and 186–206; these read FWLFLGGETVLFASLFATFLA, VTLVFIATMLLLTSSLTSVYA, LWLGITILLGAGFLGLEIYEF, LVGTHGAHVAFGLMWISTLMI, and WHFIDVVWVFIFTVVYLMGMV.

It belongs to the cytochrome c oxidase subunit 3 family.

The protein resides in the cell membrane. The enzyme catalyses 4 Fe(II)-[cytochrome c] + O2 + 8 H(+)(in) = 4 Fe(III)-[cytochrome c] + 2 H2O + 4 H(+)(out). The chain is Cytochrome c oxidase subunit 3 (ctaE) from Bacillus subtilis (strain 168).